Reading from the N-terminus, the 439-residue chain is ATP-dependent RNA helicase SUB2 (439 aa).

The span at 1 to 19 (MSHEGEEDLLEYSDNEQEI) shows a compositional bias: acidic residues. The segment at 1–48 (MSHEGEEDLLEYSDNEQEIQVDNKETAVEGTTENEATQENGEADKKGS) is disordered. Residues 29–40 (EGTTENEATQEN) show a composition bias toward polar residues. A Q motif motif is present at residues 55–83 (TGFKDFLLKPELSRAIIDCGFEHPSEVQQ). The 176-residue stretch at 86–261 (IPQSIHGTDV…RRFLQNPLEI (176 aa)) folds into the Helicase ATP-binding domain. Residue 99–106 (AKSGLGKT) coordinates ATP. Residues 208–211 (DECD) carry the DECD box motif. The Helicase C-terminal domain maps to 273–434 (GLQQYYIKLE…EFPEEGIDPS (162 aa)).

The protein belongs to the DEAD box helicase family. DECD subfamily.

Its subcellular location is the nucleus. The catalysed reaction is ATP + H2O = ADP + phosphate + H(+). Its function is as follows. ATP-binding RNA helicase involved in transcription elongation and required for the export of mRNA out of the nucleus. SUB2 also plays a role in pre-mRNA splicing and spliceosome assembly. May be involved in rDNA and telomeric silencing, and maintenance of genome integrity. The chain is ATP-dependent RNA helicase SUB2 (SUB2) from Candida glabrata (strain ATCC 2001 / BCRC 20586 / JCM 3761 / NBRC 0622 / NRRL Y-65 / CBS 138) (Yeast).